The primary structure comprises 319 residues: MDFILKMKDKSLKNIKLTREEGLRLFNSNLEELIKEANNIRKEIHGDGIDLCSIINGKSGRCGEDCAFCAQSKYHKTNISEYPLLDYEKIKKVAKENEDEGVHRFSIVTSGRGLYGEEFERVITYYSNLNKELKINLCASHGIINKESLIKLKKAGVKRYHHNLETSRNYYDKICKTHSYEERVKTIKNAKEAGLEVCSGGIIGLGETILDRIDLAITLRELEIKSIPINVLSAIKGTKLQNMIPLNEEEILRTIAVFRFINPEAKIRLAGGRYLLKNFGENAFKAGANATITGNLLTTCGNKIKDDKRLIENIGMRIF.

Residues 44–273 (IHGDGIDLCS…EAKIRLAGGR (230 aa)) enclose the Radical SAM core domain. 3 residues coordinate [4Fe-4S] cluster: C62, C66, and C69. [2Fe-2S] cluster-binding residues include S106, C138, C198, and R268.

The protein belongs to the radical SAM superfamily. Biotin synthase family. In terms of assembly, homodimer. Requires [4Fe-4S] cluster as cofactor. It depends on [2Fe-2S] cluster as a cofactor.

The catalysed reaction is (4R,5S)-dethiobiotin + (sulfur carrier)-SH + 2 reduced [2Fe-2S]-[ferredoxin] + 2 S-adenosyl-L-methionine = (sulfur carrier)-H + biotin + 2 5'-deoxyadenosine + 2 L-methionine + 2 oxidized [2Fe-2S]-[ferredoxin]. Its pathway is cofactor biosynthesis; biotin biosynthesis; biotin from 7,8-diaminononanoate: step 2/2. Functionally, catalyzes the conversion of dethiobiotin (DTB) to biotin by the insertion of a sulfur atom into dethiobiotin via a radical-based mechanism. The protein is Biotin synthase of Clostridium perfringens (strain 13 / Type A).